Consider the following 247-residue polypeptide: Coproheme decarboxylase (247 aa).

Residues arginine 129, 143–147 (YPMDK), histidine 170, glutamine 183, and serine 221 each bind Fe-coproporphyrin III. Tyrosine 143 is an active-site residue.

It belongs to the ChdC family. Type 1 subfamily. Fe-coproporphyrin III is required as a cofactor.

It carries out the reaction Fe-coproporphyrin III + 2 H2O2 + 2 H(+) = heme b + 2 CO2 + 4 H2O. The enzyme catalyses Fe-coproporphyrin III + H2O2 + H(+) = harderoheme III + CO2 + 2 H2O. It catalyses the reaction harderoheme III + H2O2 + H(+) = heme b + CO2 + 2 H2O. It functions in the pathway porphyrin-containing compound metabolism; protoheme biosynthesis. Its function is as follows. Involved in coproporphyrin-dependent heme b biosynthesis. Catalyzes the decarboxylation of Fe-coproporphyrin III (coproheme) to heme b (protoheme IX), the last step of the pathway. The reaction occurs in a stepwise manner with a three-propionate intermediate. This chain is Coproheme decarboxylase, found in Bacillus anthracis.